Reading from the N-terminus, the 95-residue chain is Small ribosomal subunit protein bS20 (95 aa).

The protein belongs to the bacterial ribosomal protein bS20 family.

Its function is as follows. Binds directly to 16S ribosomal RNA. The sequence is that of Small ribosomal subunit protein bS20 from Ehrlichia chaffeensis (strain ATCC CRL-10679 / Arkansas).